The following is an 813-amino-acid chain: Tax1-binding protein 1 homolog (813 aa).

Phosphoserine is present on residues serine 124, serine 138, and serine 225. Residues 144–596 (TTKAGLLELK…SYSLQLAEKD (453 aa)) are a coiled coil. The interval 320 to 420 (EEIGKLQSCL…ELQLHAVKTD (101 aa)) is oligomerization. The residue at position 618 (serine 618) is a Phosphoserine; by IKKA. Serine 631 is modified (phosphoserine). Residues 667–732 (AHETRDGADG…NVPIPPDPAN (66 aa)) form a disordered region. Position 692 is a phosphoserine; by IKKA (serine 692). UBZ1-type zinc fingers lie at residues 751 to 777 (HKKC…VESH) and 778 to 804 (WKVC…VQTH). Residues cysteine 754, cysteine 757, histidine 773, histidine 777, cysteine 781, cysteine 784, histidine 800, and histidine 804 each coordinate Zn(2+).

As to quaternary structure, homooligomer. Interacts with TNFAIP3. Interacts with STARD13. Interacts with MYO6. Interacts with TOM1; the interaction is indirect and is mediated by MYO6, which acts as a bridge between TOM1 and TAX1BP1. Interacts with MAVS; this interaction induces MAVS polyubiquitination. Interacts with TNIP1. Interacts with TRAF6; this interaction mediates deubiquitination of TRAF6 and inhibition of NF-kappa-B activation. Interacts with RIPK1; this interaction negatively regulates RIPK1 ubiquitination. Interacts with NBR1. Interacts with TBK1. Interacts with RB1CC1. Interacts with SQSTM1. Interacts with AZI2. Interacts with TICAM1 and TRIM32; these interactions target TICAM1 to TAX1BP1-mediated selective autophagic degradation. Phosphorylated in the C-terminal region by CHUK/IKKA leading to NF-kappa-B signaling down-regulation.

It localises to the cytoplasm. The protein localises to the mitochondrion. Its subcellular location is the preautophagosomal structure. The protein resides in the cytoplasmic vesicle. It is found in the autophagosome. In terms of biological role, ubiquitin-binding adapter that participates in inflammatory, antiviral and innate immune processes as well as selective autophagy regulation. Plays a key role in the negative regulation of NF-kappa-B and IRF3 signalings by acting as an adapter for the ubiquitin-editing enzyme A20/TNFAIP3 to bind and inactivate its substrates. Disrupts the interactions between the E3 ubiquitin ligase TRAF3 and TBK1/IKBKE to attenuate 'Lys63'-linked polyubiquitination of TBK1 and thereby IFN-beta production. Also recruits A20/TNFAIP3 to ubiquitinated signaling proteins TRAF6 and RIPK1, leading to their deubiquitination and disruption of IL-1 and TNF-induced NF-kappa-B signaling pathways. Inhibits virus-induced apoptosis by inducing the 'Lys-48'-linked polyubiquitination and degradation of MAVS via recruitment of the E3 ligase ITCH, thereby attenuating MAVS-mediated apoptosis signaling. As a macroautophagy/autophagy receptor, facilitates the xenophagic clearance of pathogenic bacteria such as Salmonella typhimurium and Mycobacterium tuberculosis. Upon NBR1 recruitment to the SQSTM1-ubiquitin condensates, acts as the major recruiter of RB1CC1 to these ubiquitin condensates to promote their autophagic degradation. Mediates the autophagic degradation of other substrates including TICAM1. This Rattus norvegicus (Rat) protein is Tax1-binding protein 1 homolog (Tax1bp1).